A 663-amino-acid polypeptide reads, in one-letter code: UvrABC system protein B (663 aa).

The region spanning Asp26 to Pro414 is the Helicase ATP-binding domain. Residue Gly39–Thr46 participates in ATP binding. The Beta-hairpin signature appears at Tyr92 to Ile115. In terms of domain architecture, Helicase C-terminal spans Gln430 to Leu596. Residues Ala624 to Gln659 form the UVR domain.

This sequence belongs to the UvrB family. As to quaternary structure, forms a heterotetramer with UvrA during the search for lesions. Interacts with UvrC in an incision complex.

It localises to the cytoplasm. In terms of biological role, the UvrABC repair system catalyzes the recognition and processing of DNA lesions. A damage recognition complex composed of 2 UvrA and 2 UvrB subunits scans DNA for abnormalities. Upon binding of the UvrA(2)B(2) complex to a putative damaged site, the DNA wraps around one UvrB monomer. DNA wrap is dependent on ATP binding by UvrB and probably causes local melting of the DNA helix, facilitating insertion of UvrB beta-hairpin between the DNA strands. Then UvrB probes one DNA strand for the presence of a lesion. If a lesion is found the UvrA subunits dissociate and the UvrB-DNA preincision complex is formed. This complex is subsequently bound by UvrC and the second UvrB is released. If no lesion is found, the DNA wraps around the other UvrB subunit that will check the other stand for damage. The polypeptide is UvrABC system protein B (Legionella pneumophila (strain Paris)).